A 170-amino-acid chain; its full sequence is Large ribosomal subunit protein bL17 (170 aa).

The segment covering 134-144 (ASAKAAQAQEK) has biased composition (low complexity). A disordered region spans residues 134-170 (ASAKAAQAQEKPAQEEEVEATSDEVAYTSEPDKAAEH).

The protein belongs to the bacterial ribosomal protein bL17 family. As to quaternary structure, part of the 50S ribosomal subunit. Contacts protein L32.

The protein is Large ribosomal subunit protein bL17 of Mycobacterium leprae (strain Br4923).